The following is a 139-amino-acid chain: Large ribosomal subunit protein uL22 (139 aa).

The segment at 1 to 21 is disordered; sequence MTAPTPEFRNKKQRKQQVKLR.

Belongs to the universal ribosomal protein uL22 family. Part of the 50S ribosomal subunit.

Functionally, this protein binds specifically to 23S rRNA; its binding is stimulated by other ribosomal proteins, e.g. L4, L17, and L20. It is important during the early stages of 50S assembly. It makes multiple contacts with different domains of the 23S rRNA in the assembled 50S subunit and ribosome. In terms of biological role, the globular domain of the protein is located near the polypeptide exit tunnel on the outside of the subunit, while an extended beta-hairpin is found that lines the wall of the exit tunnel in the center of the 70S ribosome. In Deinococcus deserti (strain DSM 17065 / CIP 109153 / LMG 22923 / VCD115), this protein is Large ribosomal subunit protein uL22.